The sequence spans 321 residues: Probable DNA polymerase III subunit delta (321 aa).

Belongs to the DNA polymerase HolA subunit family. Component of the DNA clamp loading complex consisting of tau(3):delta(1):delta'(1). The DNA polymerase III holoenzyme complex contains at least 10 different subunits organized into 3 functionally essential subassemblies: the Pol III core, the beta sliding clamp processivity factor and the clamp-loading complex. The Pol III core (subunits alpha, epsilon and theta) contains the polymerase and the 3'-5' exonuclease proofreading activities. The polymerase is tethered to the template via the dimeric beta sliding clamp processivity factor. The DNA clamp-loading complex assembles the beta sliding clamp onto the primed template and plays a central role in the organization and communication at the replication fork.

The enzyme catalyses DNA(n) + a 2'-deoxyribonucleoside 5'-triphosphate = DNA(n+1) + diphosphate. In terms of biological role, part of the beta sliding clamp loading complex, which hydrolyzes ATP to load the beta clamp onto primed DNA to form the DNA replication pre-initiation complex. DNA polymerase III is a complex, multichain enzyme responsible for most of the replicative synthesis in bacteria. This DNA polymerase also exhibits 3'-5' exonuclease activity. The delta subunit is the wrench that will open the beta subunit dimer. The DNA clamp loading complex (tau(3),delta,delta') is thought to load beta dimers onto DNA by binding ATP which alters the complex's conformation so it can bind beta sliding clamp dimers and open them at one interface. Primed DNA is recognized, ATP is hydrolyzed releasing the clamp loading complex and closing the beta sliding clamp ring around the primed DNA. The sequence is that of Probable DNA polymerase III subunit delta from Rickettsia prowazekii (strain Madrid E).